The chain runs to 355 residues: Chorismate synthase (355 aa).

NADP(+) is bound by residues arginine 44 and arginine 49. FMN contacts are provided by residues 121-123 (HFS), glycine 277, 292-296 (KPTPS), and arginine 319.

This sequence belongs to the chorismate synthase family. FMNH2 is required as a cofactor.

The catalysed reaction is 5-O-(1-carboxyvinyl)-3-phosphoshikimate = chorismate + phosphate. The protein operates within metabolic intermediate biosynthesis; chorismate biosynthesis; chorismate from D-erythrose 4-phosphate and phosphoenolpyruvate: step 7/7. Catalyzes the anti-1,4-elimination of the C-3 phosphate and the C-6 proR hydrogen from 5-enolpyruvylshikimate-3-phosphate (EPSP) to yield chorismate, which is the branch point compound that serves as the starting substrate for the three terminal pathways of aromatic amino acid biosynthesis. This reaction introduces a second double bond into the aromatic ring system. In Thermococcus kodakarensis (strain ATCC BAA-918 / JCM 12380 / KOD1) (Pyrococcus kodakaraensis (strain KOD1)), this protein is Chorismate synthase.